The primary structure comprises 584 residues: tRNA-guanine(15) transglycosylase (584 aa).

Residue Asp-95 is the Nucleophile of the active site. 2 residues coordinate substrate: Asp-130 and Gly-196. Residues Cys-279, Cys-281, and Cys-284 each coordinate Zn(2+). The PUA domain maps to 507-582 (RMRVVVSEEA…RAVKVRRGIS (76 aa)).

This sequence belongs to the archaeosine tRNA-ribosyltransferase family. Requires Zn(2+) as cofactor.

The catalysed reaction is guanosine(15) in tRNA + 7-cyano-7-deazaguanine = 7-cyano-7-carbaguanosine(15) in tRNA + guanine. The protein operates within tRNA modification; archaeosine-tRNA biosynthesis. Exchanges the guanine residue with 7-cyano-7-deazaguanine (preQ0) at position 15 in the dihydrouridine loop (D-loop) of archaeal tRNAs. This is tRNA-guanine(15) transglycosylase from Pyrococcus abyssi (strain GE5 / Orsay).